The sequence spans 157 residues: uncharacterized protein (157 aa).

The N-acetyltransferase domain maps to 9-154 (LLINYKTLDE…ETNLNAVTNE (146 aa)).

This is an uncharacterized protein from Bacillus cereus (strain G9842).